The chain runs to 83 residues: Protein YciN (83 aa).

This Escherichia coli O157:H7 protein is Protein YciN (yciN).